Here is a 233-residue protein sequence, read N- to C-terminus: Uracil-DNA glycosylase (233 aa).

The active-site Proton acceptor is aspartate 70.

It belongs to the uracil-DNA glycosylase (UDG) superfamily. UNG family.

The protein resides in the cytoplasm. It carries out the reaction Hydrolyzes single-stranded DNA or mismatched double-stranded DNA and polynucleotides, releasing free uracil.. Its function is as follows. Excises uracil residues from the DNA which can arise as a result of misincorporation of dUMP residues by DNA polymerase or due to deamination of cytosine. The polypeptide is Uracil-DNA glycosylase (Oleidesulfovibrio alaskensis (strain ATCC BAA-1058 / DSM 17464 / G20) (Desulfovibrio alaskensis)).